A 162-amino-acid polypeptide reads, in one-letter code: D-aminoacyl-tRNA deacylase (162 aa).

Positions 143-144 match the Gly-cisPro motif, important for rejection of L-amino acids motif; that stretch reads GP.

It belongs to the DTD family. In terms of assembly, homodimer.

It is found in the cytoplasm. The enzyme catalyses glycyl-tRNA(Ala) + H2O = tRNA(Ala) + glycine + H(+). The catalysed reaction is a D-aminoacyl-tRNA + H2O = a tRNA + a D-alpha-amino acid + H(+). In terms of biological role, an aminoacyl-tRNA editing enzyme that deacylates mischarged D-aminoacyl-tRNAs. Also deacylates mischarged glycyl-tRNA(Ala), protecting cells against glycine mischarging by AlaRS. Acts via tRNA-based rather than protein-based catalysis; rejects L-amino acids rather than detecting D-amino acids in the active site. By recycling D-aminoacyl-tRNA to D-amino acids and free tRNA molecules, this enzyme counteracts the toxicity associated with the formation of D-aminoacyl-tRNA entities in vivo and helps enforce protein L-homochirality. In Nitratidesulfovibrio vulgaris (strain ATCC 29579 / DSM 644 / CCUG 34227 / NCIMB 8303 / VKM B-1760 / Hildenborough) (Desulfovibrio vulgaris), this protein is D-aminoacyl-tRNA deacylase.